A 366-amino-acid chain; its full sequence is MKDLTLNDLPIREELRGQSAYGAPQLDVDVRLNTNENPYPPSEALVEELARVVAEQASNLNRYPERDAVELRTELARYITKCTGVPVTYEQLWAANGSNEVLQQLLQAFGGPGRTVLGFQPSYSMHPILAQGTQTTFINCPRDKEFRIDVDAALAAITTHQPNIVFVTTPNNPTGDVTSLDTIKKILDVAPGIVIVDEAYAEFSEQPSAISLLENYPTKLVVSRTMSKAFDFAGGRLGYFVAHKAFIDAVMLVRLPYHLSQLSQAAAIVALRHSEETLATVAKLVAERKRVQQGLLELGFEIVPSESNFLFFGHFEDQHAAWQAFLDRKVLIRDVSVSGYLRATVGLPEENDAFLNAAREVAQQFL.

An N6-(pyridoxal phosphate)lysine modification is found at lysine 228.

Belongs to the class-II pyridoxal-phosphate-dependent aminotransferase family. Histidinol-phosphate aminotransferase subfamily. In terms of assembly, homodimer. The cofactor is pyridoxal 5'-phosphate.

It carries out the reaction L-histidinol phosphate + 2-oxoglutarate = 3-(imidazol-4-yl)-2-oxopropyl phosphate + L-glutamate. It participates in amino-acid biosynthesis; L-histidine biosynthesis; L-histidine from 5-phospho-alpha-D-ribose 1-diphosphate: step 7/9. In Corynebacterium diphtheriae (strain ATCC 700971 / NCTC 13129 / Biotype gravis), this protein is Histidinol-phosphate aminotransferase.